A 743-amino-acid polypeptide reads, in one-letter code: Isocitrate dehydrogenase [NADP] 2 (743 aa).

Residues Asn87 and Ser89 each coordinate NADP(+). D-threo-isocitrate is bound by residues Ser134, Asn137, Arg141, Arg147, and Lys257. NADP(+) is bound at residue Asn137. Asp352 lines the Mg(2+) pocket. D-threo-isocitrate contacts are provided by Tyr422 and Arg549. Mg(2+) is bound by residues Asp550 and Asp554. NADP(+) contacts are provided by Ser587, His591, Arg602, Asp604, and Arg651.

The protein belongs to the monomeric-type IDH family. Monomer. The cofactor is Mg(2+). Requires Mn(2+) as cofactor.

The catalysed reaction is D-threo-isocitrate + NADP(+) = 2-oxoglutarate + CO2 + NADPH. In terms of biological role, catalyzes the oxidative decarboxylation of isocitrate to 2-oxoglutarate and carbon dioxide with the concomitant reduction of NADP(+). The sequence is that of Isocitrate dehydrogenase [NADP] 2 (icd2) from Colwellia maris.